The primary structure comprises 271 residues: Imidazole glycerol phosphate synthase subunit HisF (271 aa).

Catalysis depends on residues Asp12 and Asp136.

Belongs to the HisA/HisF family. As to quaternary structure, heterodimer of HisH and HisF.

It is found in the cytoplasm. The enzyme catalyses 5-[(5-phospho-1-deoxy-D-ribulos-1-ylimino)methylamino]-1-(5-phospho-beta-D-ribosyl)imidazole-4-carboxamide + L-glutamine = D-erythro-1-(imidazol-4-yl)glycerol 3-phosphate + 5-amino-1-(5-phospho-beta-D-ribosyl)imidazole-4-carboxamide + L-glutamate + H(+). Its pathway is amino-acid biosynthesis; L-histidine biosynthesis; L-histidine from 5-phospho-alpha-D-ribose 1-diphosphate: step 5/9. In terms of biological role, IGPS catalyzes the conversion of PRFAR and glutamine to IGP, AICAR and glutamate. The HisF subunit catalyzes the cyclization activity that produces IGP and AICAR from PRFAR using the ammonia provided by the HisH subunit. The protein is Imidazole glycerol phosphate synthase subunit HisF of Haloarcula marismortui (strain ATCC 43049 / DSM 3752 / JCM 8966 / VKM B-1809) (Halobacterium marismortui).